We begin with the raw amino-acid sequence, 125 residues long: Fluoride-specific ion channel FluC (125 aa).

A run of 4 helical transmembrane segments spans residues 5-25 (FVFIALAGALGTLARYSLAGF), 33-53 (FFPFGTLVVNITGCFAAGFLW), 69-89 (FVLVGFMGAFTTFSAFILETG), and 101-121 (IVNLLLQNSLGFGALMAGIVL). Na(+) contacts are provided by G76 and T79.

Belongs to the fluoride channel Fluc/FEX (TC 1.A.43) family.

Its subcellular location is the cell inner membrane. It catalyses the reaction fluoride(in) = fluoride(out). Na(+) is not transported, but it plays an essential structural role and its presence is essential for fluoride channel function. Fluoride-specific ion channel. Important for reducing fluoride concentration in the cell, thus reducing its toxicity. The polypeptide is Fluoride-specific ion channel FluC (Desulforapulum autotrophicum (strain ATCC 43914 / DSM 3382 / VKM B-1955 / HRM2) (Desulfobacterium autotrophicum)).